The primary structure comprises 474 residues: MFS transporter SAT21 (474 aa).

Transmembrane regions (helical) follow at residues 7–27 (LVLP…LEVP), 64–84 (LVVG…ILYF), 101–121 (CVGY…HQVF), 131–151 (LFLF…AFVA), 162–182 (FLFL…ALAT), and 189–209 (LFLP…LLQM). The segment at 220-252 (KVVGSTSDQTEPFLRSSSNSSQESGTAAPAIDP) is disordered. A compositionally biased stretch (polar residues) spans 222-244 (VGSTSDQTEPFLRSSSNSSQESG). The N-linked (GlcNAc...) asparagine glycan is linked to Asn238. 6 consecutive transmembrane segments (helical) span residues 276 to 296 (FICY…AFIF), 315 to 335 (LALS…ANAT), 346 to 366 (INIG…IMAW), 374 to 394 (FIFS…LQGV), 406 to 426 (SIFA…GPLM), and 445 to 465 (FLAS…LWAL).

This sequence belongs to the major facilitator superfamily.

The protein localises to the cell membrane. Its function is as follows. MFS transporter; part of the satratoxin SC3 cluster involved in the biosynthesis of satratoxins, trichothecene mycotoxins that are associated with human food poisonings. Satratoxins are suggested to be made by products of multiple gene clusters (SC1, SC2 and SC3) that encode 21 proteins in all, including polyketide synthases, acetyltransferases, and other enzymes expected to modify the trichothecene skeleton. SC1 encodes 10 proteins, SAT1 to SAT10. The largest are SAT8, which encodes a putative polyketide synthase (PKS) with a conventional non-reducing architecture, and SAT10, a putative protein containing four ankyrin repeats and thus may be involved in protein scaffolding. The putative short-chain reductase SAT3 may assist the PKS in some capacity. SAT6 contains a secretory lipase domain and acts probably as a trichothecene esterase. SAT5 encodes a putative acetyltransferase, and so, with SAT6, may affect endogenous protection from toxicity. The probable transcription factor SAT9 may regulate the expression of the SC1 cluster. SC2 encodes proteins SAT11 to SAT16, the largest of which encodes the putative reducing PKS SAT13. SAT11 is a cytochrome P450 monooxygenase, while SAT14 and SAT16 are probable acetyltransferases. The SC2 cluster may be regulated by the transcription factor SAT15. SC3 is a small cluster that encodes 5 proteins, SAT17 to SAT21. SAT21 is a putative MFS-type transporter which may have a role in exporting secondary metabolites. The four other proteins putatively encoded in SC3 include the taurine hydroxylase-like protein SAT17, the O-methyltransferase SAT18, the acetyltransferase SAT19, and the Cys6-type zinc finger SAT20, the latter being probably involved in regulation of SC3 expression. This Stachybotrys chartarum (strain CBS 109288 / IBT 7711) (Toxic black mold) protein is MFS transporter SAT21.